Reading from the N-terminus, the 428-residue chain is GTPase Obg (428 aa).

One can recognise an Obg domain in the interval 1–158 (MFVDQVKIYV…RDVILELKVL (158 aa)). In terms of domain architecture, OBG-type G spans 159–329 (ADVGLVGFPS…LLFEVANLIE (171 aa)). GTP is bound by residues 165-172 (GFPSVGKS), 190-194 (FTTIV), 212-215 (DLPG), 282-285 (NKMD), and 310-312 (SAV). Positions 172 and 192 each coordinate Mg(2+). The region spanning 350 to 428 (KFDTEGVKFE…ILEYEFEFID (79 aa)) is the OCT domain.

It belongs to the TRAFAC class OBG-HflX-like GTPase superfamily. OBG GTPase family. Monomer. The cofactor is Mg(2+).

The protein resides in the cytoplasm. In terms of biological role, an essential GTPase which binds GTP, GDP and possibly (p)ppGpp with moderate affinity, with high nucleotide exchange rates and a fairly low GTP hydrolysis rate. Plays a role in control of the cell cycle, stress response, ribosome biogenesis and in those bacteria that undergo differentiation, in morphogenesis control. The protein is GTPase Obg of Bacillus cereus (strain B4264).